We begin with the raw amino-acid sequence, 159 residues long: Nucleotide-binding protein PSPTO_4393 (159 aa).

It belongs to the YajQ family.

Its function is as follows. Nucleotide-binding protein. The chain is Nucleotide-binding protein PSPTO_4393 from Pseudomonas syringae pv. tomato (strain ATCC BAA-871 / DC3000).